A 154-amino-acid polypeptide reads, in one-letter code: MMMGEVQSLPSAGLHPALQDALTLALAARPQEKAPGRYELQGDNIFMNVMTFNTQSPVEKKAELHEQYIDIQLLLNGEERILFGMAGTARQCEEFHHEDDYQLCSTIDNEQAIILKPGMFAVFMPGEPHKPGCVVGEPGEIKKVVVKVKADLMA.

The protein belongs to the NanQ anomerase family. It depends on Zn(2+) as a cofactor.

The protein localises to the cytoplasm. The catalysed reaction is N-acetyl-alpha-neuraminate = aceneuramate. It catalyses the reaction N-acetyl-beta-neuraminate = aceneuramate. With respect to regulation, inhibited by 1,10-phenanthroline. Functionally, opens both the alpha- and beta-forms of N-acetylneuraminate (sialic acid; Neu5Ac) to provide aceneuramate, the preferred substrate for NanA. Has preferential activity on the beta-anomer rather than the alpha-anomer. Accelerates a reaction that is spontaneous at slightly alkaline pH, facilitates the reaction at acidic pH. In Escherichia coli (strain K12), this protein is N-acetylneuraminate anomerase NanQ.